The chain runs to 308 residues: MFSNIKDRIRLLFRKDRESYLRFYKMLGFYPKDISIYEQALLHKSLSVKSEKGRLLNNERLEFLGDAILDAVVADIVYKRFEGKREGFLTNTRSKIVQRETLNRLAIEIGLDKLIKYTARQSSHNSYMCGNAFEALVGAIYLDRGYRACKYFMEHRIIGPYINLEKISRKEVNFKSKLIEWSQKNRFEVTFELITQSHDQGYNPTFESEVLVEGISGGKGTGYSKKESQQMAARVALGKIKNDSGFIECIFAAKTARELPQEEVTVSDSKPSDSGAVTPDLSLEEIKKTDVVEQIISEAEEKAFKENA.

The region spanning 20 to 145 (YLRFYKMLGF…LVGAIYLDRG (126 aa)) is the RNase III domain. Residue Glu62 participates in Mg(2+) binding. The active site involves Asp66. Asn131 and Glu134 together coordinate Mg(2+). Residue Glu134 is part of the active site. The DRBM domain occupies 173 to 242 (NFKSKLIEWS…ARVALGKIKN (70 aa)). The disordered stretch occupies residues 261-281 (QEEVTVSDSKPSDSGAVTPDL).

This sequence belongs to the ribonuclease III family. Homodimer. It depends on Mg(2+) as a cofactor.

It is found in the cytoplasm. The catalysed reaction is Endonucleolytic cleavage to 5'-phosphomonoester.. In terms of biological role, digests double-stranded RNA. Involved in the processing of primary rRNA transcript to yield the immediate precursors to the large and small rRNAs (23S and 16S). Processes some mRNAs, and tRNAs when they are encoded in the rRNA operon. Processes pre-crRNA and tracrRNA of type II CRISPR loci if present in the organism. The polypeptide is Ribonuclease 3 (Phocaeicola vulgatus (strain ATCC 8482 / DSM 1447 / JCM 5826 / CCUG 4940 / NBRC 14291 / NCTC 11154) (Bacteroides vulgatus)).